Here is a 361-residue protein sequence, read N- to C-terminus: Peptide chain release factor 1 (361 aa).

Glutamine 235 is subject to N5-methylglutamine. The tract at residues 283-306 (RSQQATAEAMTRKLQVGSGDRSQR) is disordered.

This sequence belongs to the prokaryotic/mitochondrial release factor family. Post-translationally, methylated by PrmC. Methylation increases the termination efficiency of RF1.

It localises to the cytoplasm. Peptide chain release factor 1 directs the termination of translation in response to the peptide chain termination codons UAG and UAA. This chain is Peptide chain release factor 1, found in Xylella fastidiosa (strain M23).